Reading from the N-terminus, the 391-residue chain is uncharacterized protein (391 aa).

The next 11 helical transmembrane spans lie at 15–35 (LSFC…LPIL), 48–68 (FLIG…QIPF), 81–101 (IIFG…TNSI), 139–159 (IIGV…PIIA), 167–187 (IFWI…FLIP), 217–237 (FYLG…IIPY), 251–271 (IVYF…VFYF), 275–295 (FFLK…LLLF), 303–323 (ICLT…EIFF), 346–366 (TSQF…CTFF), and 369–389 (NHIF…SFFC).

Belongs to the major facilitator superfamily.

The protein localises to the cell membrane. This is an uncharacterized protein from Buchnera aphidicola subsp. Schizaphis graminum (strain Sg).